Reading from the N-terminus, the 95-residue chain is Integration host factor subunit beta (95 aa).

The segment at 56-76 is disordered; sequence RAPRTGRNPKTGTSVDLDGKY.

The protein belongs to the bacterial histone-like protein family. In terms of assembly, heterodimer of an alpha and a beta chain.

In terms of biological role, this protein is one of the two subunits of integration host factor, a specific DNA-binding protein that functions in genetic recombination as well as in transcriptional and translational control. This Shewanella sediminis (strain HAW-EB3) protein is Integration host factor subunit beta.